We begin with the raw amino-acid sequence, 117 residues long: Large ribosomal subunit protein uL18 (117 aa).

It belongs to the universal ribosomal protein uL18 family. As to quaternary structure, part of the 50S ribosomal subunit; part of the 5S rRNA/L5/L18/L25 subcomplex. Contacts the 5S and 23S rRNAs.

Functionally, this is one of the proteins that bind and probably mediate the attachment of the 5S RNA into the large ribosomal subunit, where it forms part of the central protuberance. This chain is Large ribosomal subunit protein uL18, found in Photobacterium profundum (strain SS9).